Here is a 376-residue protein sequence, read N- to C-terminus: DNA-directed RNA polymerase subunit alpha (376 aa).

Residues 1-259 are alpha N-terminal domain (alpha-NTD); the sequence is MSDNSQNLLY…KHFSIFEKMD (259 aa). The segment at 276-376 is alpha C-terminal domain (alpha-CTD); it reads KDDILHKLVL…EKIRSKNVKG (101 aa).

Belongs to the RNA polymerase alpha chain family. As to quaternary structure, homodimer. The RNAP catalytic core consists of 2 alpha, 1 beta, 1 beta' and 1 omega subunit. When a sigma factor is associated with the core the holoenzyme is formed, which can initiate transcription.

It carries out the reaction RNA(n) + a ribonucleoside 5'-triphosphate = RNA(n+1) + diphosphate. Its function is as follows. DNA-dependent RNA polymerase catalyzes the transcription of DNA into RNA using the four ribonucleoside triphosphates as substrates. The sequence is that of DNA-directed RNA polymerase subunit alpha from Chlamydia felis (strain Fe/C-56) (Chlamydophila felis).